A 749-amino-acid chain; its full sequence is MGSDKRVSRSERSGRYGSAFDRDDRDDRDSRSRRRDSEYKRYRDERNDQYDDYRDYESPERERMRDRERRNSDRSEDGYHSDGDYMDHDYRQDYYMDEKESKTIMLRGLPININENDIRELVESFEGPQPADVRLMKRKTGLSRGFAFVEFYHLQDATRWMEANQKKLVIQGKTIAMHYSNPRPKFEDWLCNKCGLYNFRRRLKCFRCGAAKAESDMEAPSGSSETPQSADYYSDSGYVSSAIILRNIGPHTVVDSILSALAPYVSLVVSNIRLIKDKQTQQNRGFAFVQLPSALEASQLLQILQTLHPPLKIDGKTIGVDFAKSARKDLVLPDGHRVSAFSVASTAIAAAQWSATQPAQQSGEAGDYAYLQQGQEGNSNFGQCSQDYQPFYQTQTAAVDQDTAPQSEGSPVPATTSAVVCQSPQMYQQPGSPTQSGTSTAASTTPASTTSTEEATTPTAIVPGVKYSVPDTSTYQYDESSGYYYDPQTGLYYDPNSQYYYNSLTQQYLYWDGEKQTYLPAADGTGQSGAQPNGANPGTSKEGKEKKEKPKSKTAQQIAKDMERWAKSLNKQKENFKNSFQPLSSRDEERKESAAADAGFALFEKKQGALFERQFLPDMMMMMVNTEEEKPPNAKYRDRAAERREKYGIPEPPEPKRKRFDPTVVNYEQPTKDGIDNSNIGNKMLQAMGWKEGSGLGRKSQGITAPIQAQVRMRGAGLGAKGSSYGVNTSDSYKDAVKKAMFARFSEME.

The tract at residues 1–88 (MGSDKRVSRS…YHSDGDYMDH (88 aa)) is disordered. Residues 102–182 (KTIMLRGLPI…KTIAMHYSNP (81 aa)) form the RRM 1 domain. The RanBP2-type zinc-finger motif lies at 185-214 (KFEDWLCNKCGLYNFRRRLKCFRCGAAKAE). Residues 241–325 (SAIILRNIGP…KTIGVDFAKS (85 aa)) enclose the RRM 2 domain. Disordered stretches follow at residues 425 to 471 (QMYQ…SVPD), 520 to 558 (PAADGTGQSGAQPNGANPGTSKEGKEKKEKPKSKTAQQI), 570 to 595 (NKQKENFKNSFQPLSSRDEERKESAA), and 626 to 680 (TEEE…NSNI). A compositionally biased stretch (low complexity) spans 429–460 (QPGSPTQSGTSTAASTTPASTTSTEEATTPTA). Composition is skewed to basic and acidic residues over residues 585-594 (SRDEERKESA) and 627-648 (EEEKPPNAKYRDRAAERREKYG). In terms of domain architecture, G-patch spans 677–723 (NSNIGNKMLQAMGWKEGSGLGRKSQGITAPIQAQVRMRGAGLGAKGS).

This sequence belongs to the RBM5/RBM10 family. In terms of assembly, component of the spliceosome A complex (also known as the prespliceosome). Appears to dissociate from the spliceosome upon formation of the spliceosome B complex (also known as the precatalytic spliceosome), in which the heterotrimeric U4/U6.U5 snRNPs are bound.

The protein localises to the nucleus. In terms of biological role, component of the spliceosome A complex. Regulates alternative splicing of a number of mRNAs. May modulate splice site pairing after recruitment of the U1 and U2 snRNPs to the 5' and 3' splice sites of the intron. The sequence is that of RNA-binding protein 5-B (rbm5-b) from Xenopus laevis (African clawed frog).